Here is a 267-residue protein sequence, read N- to C-terminus: Nus factor SuhB (267 aa).

Residues E67, D84, and L86 each coordinate Mg(2+). E67 contacts substrate. Substrate is bound by residues 86–89 (LDGT), R183, and D212.

The protein belongs to the inositol monophosphatase superfamily. As to quaternary structure, homodimer. The rRNA transcription and antitermination complex (rrnTAC) consists of RNA polymerase (RNAP), NusA, NusB, NusE (rpsJ), NusG, SubB, ribosomal protein S4, DNA and precursor rRNA; S4 is more flexible than other subunits. Requires Mg(2+) as cofactor.

The protein resides in the cytoplasm. It catalyses the reaction a myo-inositol phosphate + H2O = myo-inositol + phosphate. Its function is as follows. Part of the processive rRNA transcription and antitermination complex (rrnTAC). The complex forms an RNA-chaperone ring around the RNA exit tunnel of RNA polymerase (RNAP). It supports rapid transcription and antitermination of rRNA operons, cotranscriptional rRNA folding, and annealing of distal rRNA regions to allow correct ribosome biogenesis. This subunit may play a central role in organizing the structure. This chain is Nus factor SuhB, found in Vibrio cholerae serotype O1 (strain ATCC 39315 / El Tor Inaba N16961).